Consider the following 289-residue polypeptide: UPF0276 protein BB1291 (289 aa).

The protein belongs to the UPF0276 family.

This chain is UPF0276 protein BB1291, found in Bordetella bronchiseptica (strain ATCC BAA-588 / NCTC 13252 / RB50) (Alcaligenes bronchisepticus).